The following is a 190-amino-acid chain: MLLFTLCFFADLENGGKALASPPGKWQKADVRFDSSTAFKSLVVSPDKKTVENVGVPQVVPDNPERFSSSPCVLGSPGFRSGRHFFEVRYGTQREWAVGLAGKSVKRKGYLRLVPEELIWQRGLWFLQRLETDSDKLQKGSGKIVVFLDYSEGKVIFDQDGEVTTVQANFNGEEVVPFYYLGGGVSLTNL.

The signal sequence occupies residues 1–20 (MLLFTLCFFADLENGGKALA). Residues 21–127 (SPPGKWQKAD…LIWQRGLWFL (107 aa)) form the B30.2/SPRY domain. A propeptide spanning residues 128-190 (QRLETDSDKL…LGGGVSLTNL (63 aa)) is cleaved from the precursor.

Belongs to the ohanin/vespryn family. Expressed by the venom gland.

It localises to the secreted. Its function is as follows. Neurotoxin that produces dose-dependent hypolocomotion and hyperalgesia in mice. May directly act on the central nervous system, as it is 6500-fold more potent when administered intracerebroventricularly than intraperitoneal. The polypeptide is Vespryn-21 (Drysdalia coronoides (White-lipped snake)).